A 304-amino-acid chain; its full sequence is Elongation factor Ts (304 aa).

The tract at residues 80–83 (TDFV) is involved in Mg(2+) ion dislocation from EF-Tu.

The protein belongs to the EF-Ts family.

It is found in the cytoplasm. In terms of biological role, associates with the EF-Tu.GDP complex and induces the exchange of GDP to GTP. It remains bound to the aminoacyl-tRNA.EF-Tu.GTP complex up to the GTP hydrolysis stage on the ribosome. The sequence is that of Elongation factor Ts from Clostridium tetani (strain Massachusetts / E88).